A 507-amino-acid chain; its full sequence is Probable aldehyde dehydrogenase (507 aa).

NAD(+) is bound at residue 219-225; sequence GFGAEAG. Residues Glu263 and Cys302 contribute to the active site.

Belongs to the aldehyde dehydrogenase family.

The catalysed reaction is an aldehyde + NAD(+) + H2O = a carboxylate + NADH + 2 H(+). This is Probable aldehyde dehydrogenase from Mycobacterium bovis (strain ATCC BAA-935 / AF2122/97).